Consider the following 128-residue polypeptide: uncharacterized protein (128 aa).

This is an uncharacterized protein from Saccharomyces cerevisiae (strain ATCC 204508 / S288c) (Baker's yeast).